A 106-amino-acid polypeptide reads, in one-letter code: Nucleoid-associated protein Nham_0463 (106 aa).

The protein belongs to the YbaB/EbfC family. In terms of assembly, homodimer.

The protein resides in the cytoplasm. It is found in the nucleoid. Binds to DNA and alters its conformation. May be involved in regulation of gene expression, nucleoid organization and DNA protection. The chain is Nucleoid-associated protein Nham_0463 from Nitrobacter hamburgensis (strain DSM 10229 / NCIMB 13809 / X14).